Consider the following 31-residue polypeptide: Cytochrome b6-f complex subunit 6 (31 aa).

Residues 4–24 traverse the membrane as a helical segment; sequence ITSYFGFLLAALTITSVLFIG.

The protein belongs to the PetL family. The 4 large subunits of the cytochrome b6-f complex are cytochrome b6, subunit IV (17 kDa polypeptide, PetD), cytochrome f and the Rieske protein, while the 4 small subunits are PetG, PetL, PetM and PetN. The complex functions as a dimer.

The protein resides in the plastid. It is found in the chloroplast thylakoid membrane. Functionally, component of the cytochrome b6-f complex, which mediates electron transfer between photosystem II (PSII) and photosystem I (PSI), cyclic electron flow around PSI, and state transitions. PetL is important for photoautotrophic growth as well as for electron transfer efficiency and stability of the cytochrome b6-f complex. The protein is Cytochrome b6-f complex subunit 6 of Nandina domestica (Heavenly bamboo).